A 246-amino-acid chain; its full sequence is 1-(5-phosphoribosyl)-5-[(5-phosphoribosylamino)methylideneamino] imidazole-4-carboxamide isomerase (246 aa).

Residue Asp-8 is the Proton acceptor of the active site. Asp-131 functions as the Proton donor in the catalytic mechanism.

This sequence belongs to the HisA/HisF family.

The protein localises to the cytoplasm. It carries out the reaction 1-(5-phospho-beta-D-ribosyl)-5-[(5-phospho-beta-D-ribosylamino)methylideneamino]imidazole-4-carboxamide = 5-[(5-phospho-1-deoxy-D-ribulos-1-ylimino)methylamino]-1-(5-phospho-beta-D-ribosyl)imidazole-4-carboxamide. It participates in amino-acid biosynthesis; L-histidine biosynthesis; L-histidine from 5-phospho-alpha-D-ribose 1-diphosphate: step 4/9. This Chromobacterium violaceum (strain ATCC 12472 / DSM 30191 / JCM 1249 / CCUG 213 / NBRC 12614 / NCIMB 9131 / NCTC 9757 / MK) protein is 1-(5-phosphoribosyl)-5-[(5-phosphoribosylamino)methylideneamino] imidazole-4-carboxamide isomerase.